The primary structure comprises 718 residues: Adhesin-like cell surface protein MAD1 (718 aa).

Positions 1 to 19 are cleaved as a signal peptide; it reads MKGAIQFLGALAAVQAVSA. 9 tandem repeats follow at residues 217-243, 244-265, 266-282, 283-309, 310-336, 337-358, 359-382, 383-402, and 403-420. The tract at residues 452–472 is disordered; sequence TSIPYETPSPSETETLPPSGT. In terms of domain architecture, CFEM spans 462–575; it reads SETETLPPSG…VTLPPVTTGA (114 aa). Disulfide bonds link C494/C526, C504/C512, and C514/C548. D509 provides a ligand contact to heme. G693 is lipidated: GPI-anchor amidated glycine. The propeptide at 694–718 is removed in mature form; that stretch reads AASSFKAFSTVMLAGVIGLTALIMA.

Belongs to the RBT5 family. The GPI-anchor is attached to the protein in the endoplasmic reticulum and serves to target the protein to the cell surface. There, the glucosamine-inositol phospholipid moiety is cleaved off and the GPI-modified mannoprotein is covalently attached via its lipidless GPI glycan remnant to the 1,6-beta-glucan of the outer cell wall layer.

The protein resides in the secreted. It localises to the cell wall. It is found in the cell membrane. Functionally, cell surface adhesion protein that plays a key role in switching between the saprophytic lifestyle and the predacious lifestyle (nematode trapping). Likely functions to prevent energy-consuming trap formation in the absence of nematodes, and keeps the fungus in the saprophytic life style. May influence the induction signal of trap formation by limiting the porosity of the cell wall and thus affecting its permeability of nitrogen source. In Arthrobotrys oligospora (strain ATCC 24927 / CBS 115.81 / DSM 1491) (Nematode-trapping fungus), this protein is Adhesin-like cell surface protein MAD1.